Consider the following 172-residue polypeptide: Shikimate kinase (172 aa).

Residue 17-22 (GTGKST) coordinates ATP. Position 21 (Ser21) interacts with Mg(2+). Positions 39, 63, and 84 each coordinate substrate. Position 122 (Arg122) interacts with ATP. Arg140 lines the substrate pocket.

The protein belongs to the shikimate kinase family. As to quaternary structure, monomer. It depends on Mg(2+) as a cofactor.

It localises to the cytoplasm. The catalysed reaction is shikimate + ATP = 3-phosphoshikimate + ADP + H(+). Its pathway is metabolic intermediate biosynthesis; chorismate biosynthesis; chorismate from D-erythrose 4-phosphate and phosphoenolpyruvate: step 5/7. Catalyzes the specific phosphorylation of the 3-hydroxyl group of shikimic acid using ATP as a cosubstrate. This Staphylococcus haemolyticus (strain JCSC1435) protein is Shikimate kinase.